An 86-amino-acid polypeptide reads, in one-letter code: MAHKKGGGSSRNGRDSESKRLGVKAYGDQFVSAGSIIVRQRGTKVHPGLNVGRGGDDTLFAKVDGRVRFGRSRGRSVVSVVREAPA.

Positions 1–21 (MAHKKGGGSSRNGRDSESKRL) are disordered.

It belongs to the bacterial ribosomal protein bL27 family.

The protein is Large ribosomal subunit protein bL27 of Rubrobacter xylanophilus (strain DSM 9941 / JCM 11954 / NBRC 16129 / PRD-1).